Consider the following 305-residue polypeptide: Autophagy-related protein 14 (305 aa).

Positions Lys-34–Arg-147 form a coiled coil.

This sequence belongs to the ATG14 family. As to quaternary structure, component of the autophagy-specific VPS34 PI3-kinase complex I.

The protein resides in the preautophagosomal structure membrane. Its subcellular location is the vacuole membrane. Functionally, required for cytoplasm to vacuole transport (Cvt) and autophagy as a part of the autophagy-specific VPS34 PI3-kinase complex I. This complex is essential to recruit the ATG8-phosphatidylinositol conjugate and the ATG12-ATG5 conjugate to the pre-autophagosomal structure. ATG14 mediates the specific binding of the VPS34 PI3-kinase complex I to the preautophagosomal structure (PAS). The chain is Autophagy-related protein 14 from Kluyveromyces marxianus (strain DMKU3-1042 / BCC 29191 / NBRC 104275) (Yeast).